The sequence spans 502 residues: Cytochrome P450 71B20 (502 aa).

Residues 1–21 (MAISFLCFCLITLASLIFFAK) traverse the membrane as a helical segment. Cys-444 contacts heme.

It belongs to the cytochrome P450 family. It depends on heme as a cofactor.

It localises to the membrane. The polypeptide is Cytochrome P450 71B20 (CYP71B20) (Arabidopsis thaliana (Mouse-ear cress)).